A 535-amino-acid chain; its full sequence is GMP synthase [glutamine-hydrolyzing] (535 aa).

The 194-residue stretch at 24 to 217 folds into the Glutamine amidotransferase type-1 domain; the sequence is KILIVDFGSQ…VRKVAGLKGD (194 aa). C101 functions as the Nucleophile in the catalytic mechanism. Catalysis depends on residues H191 and E193. The GMPS ATP-PPase domain occupies 218 to 410; that stretch reads WTMRAFREEA…LGLPEVFVGR (193 aa). Residue 245–251 participates in ATP binding; that stretch reads SGGVDSA.

Homodimer.

It catalyses the reaction XMP + L-glutamine + ATP + H2O = GMP + L-glutamate + AMP + diphosphate + 2 H(+). It functions in the pathway purine metabolism; GMP biosynthesis; GMP from XMP (L-Gln route): step 1/1. Its function is as follows. Catalyzes the synthesis of GMP from XMP. This Rhodopseudomonas palustris (strain BisB18) protein is GMP synthase [glutamine-hydrolyzing].